The sequence spans 154 residues: MVKAVAVVRGDSKVSGSVVFEQETENGPTTITWDITGHDANAKRGMHIHTFGDNTNGCTSAGPHFNPHGKTHGNRTDENRHVGDLGNIETDAQGNSKGTVTDNLIKLIGPESVIGRTVVVHAGTDDLGKGDTEESLKTGNAGARPACGVIGISA.

Positions 47, 49, and 64 each coordinate Cu cation. The cysteines at positions 58 and 147 are disulfide-linked. Zn(2+) is bound by residues His64, His72, His81, and Asp84. His121 contributes to the Cu cation binding site. Position 144 (Arg144) interacts with substrate.

The protein belongs to the Cu-Zn superoxide dismutase family. In terms of assembly, homodimer. The cofactor is Cu cation. Zn(2+) serves as cofactor.

Its subcellular location is the cytoplasm. It carries out the reaction 2 superoxide + 2 H(+) = H2O2 + O2. Its function is as follows. Destroys radicals which are normally produced within the cells and which are toxic to biological systems. The polypeptide is Superoxide dismutase [Cu-Zn] (SOD1) (Podospora anserina (Pleurage anserina)).